A 299-amino-acid chain; its full sequence is Protease HtpX homolog (299 aa).

2 consecutive transmembrane segments (helical) span residues 14 to 34 and 39 to 59; these read WLLLLVFFLLLGLVGYGVGYL and GFGGLILALVIGFIYAVTMIF. Zn(2+) is bound at residue histidine 143. Glutamate 144 is an active-site residue. Residue histidine 147 coordinates Zn(2+). Helical transmembrane passes span 153-173 and 198-218; these read IRISTIAVALASAITMLAVMA and IILLIISLIAIILAPLAATLV. Glutamate 227 is a Zn(2+) binding site.

This sequence belongs to the peptidase M48B family. Zn(2+) serves as cofactor.

The protein localises to the cell membrane. This chain is Protease HtpX homolog, found in Streptococcus thermophilus (strain ATCC BAA-491 / LMD-9).